The sequence spans 462 residues: Argininosuccinate lyase (462 aa).

This sequence belongs to the lyase 1 family. Argininosuccinate lyase subfamily.

The protein resides in the cytoplasm. It catalyses the reaction 2-(N(omega)-L-arginino)succinate = fumarate + L-arginine. It functions in the pathway amino-acid biosynthesis; L-arginine biosynthesis; L-arginine from L-ornithine and carbamoyl phosphate: step 3/3. This chain is Argininosuccinate lyase, found in Chloroflexus aggregans (strain MD-66 / DSM 9485).